The chain runs to 274 residues: Oxidoreductase BOA17 (274 aa).

Residues Leu-14, Thr-32, Asp-57, Asn-84, and Lys-117 each coordinate NADP(+). Catalysis depends on proton donor residues Ser-135 and Tyr-149. NADP(+) contacts are provided by Tyr-149, Lys-153, Ile-182, and Thr-184. The active-site Lowers pKa of active site Tyr is Lys-153.

Belongs to the short-chain dehydrogenases/reductases (SDR) family.

Its pathway is polyketide biosynthesis. Functionally, oxidoreductase; part of the gene cluster B that mediates the biosynthesis of botcinic acid and its botcinin derivatives, acetate-derived polyketides that contribute to virulence when combined with the sesquiterpene botrydial. Botcinic acid and its derivatives have been shown to induce chlorosis and necrosis during host plant infection, but also have antifungal activities. Two polyketide synthases, BOA6 and BOA9, are involved in the biosynthesis of botcinins. BOA6 mediates the formation of the per-methylated tetraketide core by condensation of four units of malonyl-CoA with one unit of acetyl-CoA, which would be methylated in activated methylene groups to yield a bicyclic acid intermediate that could then either be converted to botrylactone derivatives or lose the starter acetate unit through a retro-Claisen type C-C bond cleavage to yield botcinin derivatives. The second polyketide synthase, BOA9, is probably required for the biosynthesis of the tetraketide side chain of botcinins. The methyltransferase (MT) domain within BOA6 is probably responsible for the incorporation of four methyl groups. The trans-enoyl reductase BOA5 might take over the enoyl reductase function of BOA6 that misses an ER domain. The monooxygenases BOA2, BOA3 and BOA4 might be involved in further hydroxylations at C4, C5 and C8, whereas BOA7, close to BOA9, could potentially be involved in the hydroxylation at C4 in the side chain of botcinins. This chain is Oxidoreductase BOA17, found in Botryotinia fuckeliana (strain B05.10) (Noble rot fungus).